Reading from the N-terminus, the 542-residue chain is Phosphoenolpyruvate carboxykinase (ATP) (542 aa).

Positions 67, 208, and 214 each coordinate substrate. ATP is bound by residues lysine 214, histidine 233, and 249-257 (GLSGTGKTT). Mn(2+) contacts are provided by lysine 214 and histidine 233. Mn(2+) is bound at residue aspartate 270. Residues glutamate 298, arginine 334, 450-451 (RI), and threonine 456 contribute to the ATP site. Arginine 334 is a binding site for substrate.

This sequence belongs to the phosphoenolpyruvate carboxykinase (ATP) family. In terms of assembly, monomer. Mn(2+) is required as a cofactor.

Its subcellular location is the cytoplasm. It carries out the reaction oxaloacetate + ATP = phosphoenolpyruvate + ADP + CO2. Its pathway is carbohydrate biosynthesis; gluconeogenesis. Involved in the gluconeogenesis. Catalyzes the conversion of oxaloacetate (OAA) to phosphoenolpyruvate (PEP) through direct phosphoryl transfer between the nucleoside triphosphate and OAA. This Vibrio cholerae serotype O1 (strain ATCC 39541 / Classical Ogawa 395 / O395) protein is Phosphoenolpyruvate carboxykinase (ATP).